The chain runs to 142 residues: Crustacean hyperglycemic hormones (142 aa).

The first 26 residues, Met-1–Ala-26, serve as a signal peptide directing secretion. Gln-67 bears the Pyrrolidone carboxylic acid; partial mark. Cystine bridges form between Cys-73-Cys-109, Cys-89-Cys-105, and Cys-92-Cys-118. Val-138 bears the Valine amide mark.

It belongs to the arthropod CHH/MIH/GIH/VIH hormone family. The N-terminus is blocked only in isoform CHH-II but not in isoform CHH-I. In terms of tissue distribution, produced by the medulla terminalis X-organ in the eyestalks and transported to the sinus gland where they are stored and released.

The protein resides in the secreted. Functionally, hormone found in the sinus gland of isopods and decapods which controls the blood sugar level. Has a secretagogue action over the amylase released from the midgut gland. May act as a stress hormone and may be involved in the control of molting and reproduction. The chain is Crustacean hyperglycemic hormones from Carcinus maenas (Common shore crab).